A 178-amino-acid polypeptide reads, in one-letter code: ATP synthase subunit delta (178 aa).

It belongs to the ATPase delta chain family. F-type ATPases have 2 components, F(1) - the catalytic core - and F(0) - the membrane proton channel. F(1) has five subunits: alpha(3), beta(3), gamma(1), delta(1), epsilon(1). F(0) has three main subunits: a(1), b(2) and c(10-14). The alpha and beta chains form an alternating ring which encloses part of the gamma chain. F(1) is attached to F(0) by a central stalk formed by the gamma and epsilon chains, while a peripheral stalk is formed by the delta and b chains.

It localises to the cell membrane. In terms of biological role, f(1)F(0) ATP synthase produces ATP from ADP in the presence of a proton or sodium gradient. F-type ATPases consist of two structural domains, F(1) containing the extramembraneous catalytic core and F(0) containing the membrane proton channel, linked together by a central stalk and a peripheral stalk. During catalysis, ATP synthesis in the catalytic domain of F(1) is coupled via a rotary mechanism of the central stalk subunits to proton translocation. Its function is as follows. This protein is part of the stalk that links CF(0) to CF(1). It either transmits conformational changes from CF(0) to CF(1) or is implicated in proton conduction. This chain is ATP synthase subunit delta, found in Streptococcus mutans serotype c (strain ATCC 700610 / UA159).